The sequence spans 255 residues: Uracil-DNA glycosylase (255 aa).

The interval methionine 1 to proline 20 is disordered. Catalysis depends on aspartate 99, which acts as the Proton acceptor.

This sequence belongs to the uracil-DNA glycosylase (UDG) superfamily. UNG family.

The protein resides in the host nucleus. It catalyses the reaction Hydrolyzes single-stranded DNA or mismatched double-stranded DNA and polynucleotides, releasing free uracil.. In terms of biological role, excises uracil residues from the DNA which can arise as a result of misincorporation of dUMP residues by DNA polymerase or deamination of cytosines. Therefore may reduce deleterious uracil incorporation into the viral genome, particularly in terminally differentiated cells which lack DNA repair enzymes. The protein is Uracil-DNA glycosylase of Human herpesvirus 2 (strain HG52) (HHV-2).